A 386-amino-acid chain; its full sequence is Cytochrome b (386 aa).

4 helical membrane passes run 32–52 (LGSL…FLAM), 76–98 (WFIR…IHIG), 113–133 (VWNV…LGYC), and 179–199 (FFAF…MHFM). Residues His82 and His96 each contribute to the heme b site. 2 residues coordinate heme b: His183 and His197. Position 202 (His202) interacts with a ubiquinone. The next 4 membrane-spanning stretches (helical) occupy residues 225-245 (FIFK…LFVF), 289-309 (LLGV…PITD), 321-341 (FSKF…HLGE), and 348-368 (FVVM…VIVP).

It belongs to the cytochrome b family. As to quaternary structure, fungal cytochrome b-c1 complex contains 10 subunits; 3 respiratory subunits, 2 core proteins and 5 low-molecular weight proteins. Cytochrome b-c1 complex is a homodimer. It depends on heme b as a cofactor.

The protein resides in the mitochondrion inner membrane. Its function is as follows. Component of the ubiquinol-cytochrome c reductase complex (complex III or cytochrome b-c1 complex) that is part of the mitochondrial respiratory chain. The b-c1 complex mediates electron transfer from ubiquinol to cytochrome c. Contributes to the generation of a proton gradient across the mitochondrial membrane that is then used for ATP synthesis. The polypeptide is Cytochrome b (COB) (Kluyveromyces lactis (strain ATCC 8585 / CBS 2359 / DSM 70799 / NBRC 1267 / NRRL Y-1140 / WM37) (Yeast)).